The primary structure comprises 117 residues: uncharacterized protein (117 aa).

It is found in the plastid. Its subcellular location is the chloroplast. This is an uncharacterized protein from Chlamydomonas reinhardtii (Chlamydomonas smithii).